A 359-amino-acid chain; its full sequence is N-acetylneuraminate-9-phosphate synthase (359 aa).

N6-acetyllysine is present on residues Lys61, Lys74, and Lys79. Phosphoserine is present on Ser275. Lys290 is modified (N6-acetyllysine). Positions 294–353 constitute an AFP-like domain; that stretch reads SVVAKVKIPAGTTLTLDMLTVKVGEPKGYPPEDIFNLAGKKVLVTIEEDDTVMEESVESH.

As to expression, ubiquitous.

It is found in the cytoplasm. It carries out the reaction aldehydo-N-acetyl-D-mannosamine 6-phosphate + phosphoenolpyruvate + H2O = N-acetylneuraminate 9-phosphate + phosphate. In terms of biological role, catalyzes condensation of phosphoenolpyruvate (PEP) and N-acetylmannosamine 6-phosphate (ManNAc-6-P) to synthesize N-acetylneuraminate-9-phosphate (Neu5Ac-9-P). Neu5Ac-9-P is the phosphorylated forms of sialic acid N-acetylneuraminic acid (Neu5Ac). In contrast with human ortholog, has no detectable activity towards D-mannose 6-phosphate. The chain is N-acetylneuraminate-9-phosphate synthase from Mus musculus (Mouse).